A 332-amino-acid polypeptide reads, in one-letter code: Adenine deaminase (332 aa).

His-16, His-18, and His-196 together coordinate Zn(2+). Glu-199 serves as the catalytic Proton donor. Asp-277 lines the Zn(2+) pocket. Asp-278 is a binding site for substrate.

This sequence belongs to the metallo-dependent hydrolases superfamily. Adenosine and AMP deaminases family. Adenine deaminase type 2 subfamily. It depends on Zn(2+) as a cofactor.

The enzyme catalyses adenine + H2O + H(+) = hypoxanthine + NH4(+). Its function is as follows. Catalyzes the hydrolytic deamination of adenine to hypoxanthine. Plays an important role in the purine salvage pathway and in nitrogen catabolism. This Acinetobacter baylyi (strain ATCC 33305 / BD413 / ADP1) protein is Adenine deaminase.